Reading from the N-terminus, the 948-residue chain is Insulin receptor substrate 1 (948 aa).

One can recognise a PH domain in the interval 8–109; that stretch reads GMALSGYLKK…WLDKLLVLQR (102 aa). One can recognise an IRS-type PTB domain in the interval 122-236; it reads YDQVWQVVIQ…SAMSAKTESN (115 aa). Residues 247–270 form a disordered region; that stretch reads PDLSHEPMRKRSSSANEASKPINV. A phosphoserine mark is found at serine 286 and serine 287. Residues 304 to 329 show a composition bias toward polar residues; sequence RNGTLSESSNQTYFGSNHGLRSNTIS. Positions 304–373 are disordered; the sequence is RNGTLSESSN…SDDNGSFSHY (70 aa). The residue at position 342 (serine 342) is a Phosphoserine. Tyrosine 410 carries the phosphotyrosine; by INSR modification. The short motif at 410–413 is the YXXM motif 1 element; the sequence is YIPM. The tract at residues 528 to 559 is disordered; it reads ANRSQSSITKEGTSYSTSSNRQKKSTSAPLLS. Polar residues predominate over residues 529 to 556; that stretch reads NRSQSSITKEGTSYSTSSNRQKKSTSAP. A Phosphoserine modification is found at serine 554. The YXXM motif 2 signature appears at 640–643; the sequence is YLEM. The segment at 703–734 is disordered; that stretch reads EKKSNSPLNETPCSLKPTDVESNSHDEHSTNN. Basic and acidic residues predominate over residues 720–731; that stretch reads TDVESNSHDEHS. Phosphotyrosine; by INSR is present on tyrosine 891. The interval 907 to 948 is disordered; it reads YLKRGSRESPPVSACPGDGNTYAKIDFDQSDSSSSSSNIFNT. Phosphoserine occurs at positions 912 and 915. The residue at position 928 (tyrosine 928) is a Phosphotyrosine; by INSR. Low complexity predominate over residues 936-948; that stretch reads SDSSSSSSNIFNT.

As to quaternary structure, bindings to phosphatidylinositol 3-kinase and SHP2.

Functionally, activates phosphatidylinositol 3-kinase when bound to the regulatory p85 subunit. May mediate the control of various cellular processes by insulin-like peptides. When phosphorylated by the insulin receptor binds specifically to various cellular proteins containing SH2 domains. Involved in control of cell proliferation, cell size, and body and organ growth throughout development. Also has a role in a signaling pathway controlling the physiological response required to endure periods of low nutrient conditions. Insulin/insulin-like growth factor (IGF) signaling pathway has a role in regulating aging and is necessary in the ovary for vitellogenic maturation. The sequence is that of Insulin receptor substrate 1 from Drosophila erecta (Fruit fly).